A 60-amino-acid chain; its full sequence is MTTQQTVKIQLVRSPIGTKESHRATVRGLGLRKLNSVSELKDSPEVRGMINKISYLVKVL.

This sequence belongs to the universal ribosomal protein uL30 family. Part of the 50S ribosomal subunit.

The sequence is that of Large ribosomal subunit protein uL30 from Paracidovorax citrulli (strain AAC00-1) (Acidovorax citrulli).